Consider the following 207-residue polypeptide: Large ribosomal subunit protein uL4 (207 aa).

Positions 44–76 (RRQGTQSTKTKSEVRGGGKKPWRQKGTGRARQG) are disordered. Positions 60-71 (GGKKPWRQKGTG) are enriched in basic residues.

The protein belongs to the universal ribosomal protein uL4 family. In terms of assembly, part of the 50S ribosomal subunit.

In terms of biological role, one of the primary rRNA binding proteins, this protein initially binds near the 5'-end of the 23S rRNA. It is important during the early stages of 50S assembly. It makes multiple contacts with different domains of the 23S rRNA in the assembled 50S subunit and ribosome. Its function is as follows. Forms part of the polypeptide exit tunnel. In Ruminiclostridium cellulolyticum (strain ATCC 35319 / DSM 5812 / JCM 6584 / H10) (Clostridium cellulolyticum), this protein is Large ribosomal subunit protein uL4.